The primary structure comprises 645 residues: Chlorophyllide a oxygenase, chloroplastic (645 aa).

Residues 1-46 are disordered; sequence MLPASLQRKAAAVGGRGPTNQSRVAVRVSAQPKEAPPASTPIVEDP. A coiled-coil region spans residues 105–218; the sequence is QARQKLEYLR…RKASDLDIKE (114 aa). The segment at 258-287 is disordered; the sequence is ATTVTQEVPSTSYGTPVDRAPRRSKAAIRR. Residues 259–271 show a composition bias toward polar residues; it reads TTVTQEVPSTSYG. Positions 305 to 406 constitute a Rieske domain; that stretch reads WYPAEFSARL…CAEKDGFIWV (102 aa). Residues Cys-346, His-348, Cys-365, and His-368 each contribute to the [2Fe-2S] cluster site. Positions 446, 450, 453, and 458 each coordinate Fe cation.

The protein localises to the plastid. The protein resides in the chloroplast inner membrane. Its subcellular location is the chloroplast thylakoid membrane. The catalysed reaction is chlorophyllide a + 2 NADPH + 2 O2 + 2 H(+) = chlorophyllide b + 2 NADP(+) + 3 H2O. Its function is as follows. Catalyzes a two-step oxygenase reaction involved in the synthesis of chlorophyll b. Acts specifically on the non-esterified chlorophyllide a and not on chlorophyll a. This chain is Chlorophyllide a oxygenase, chloroplastic (CAO), found in Chlamydomonas reinhardtii (Chlamydomonas smithii).